Here is a 751-residue protein sequence, read N- to C-terminus: MSQVNTSQGPVAQGRQRRLSSLSEFNDPFSNAEVYYGPPTDPRKQKQAKPAKINRTRTMSVFDNVSPFKKTGFGKLQQTRRGSEDDTYSSSQGNRRFFIEDVDKTLNELLAAEDTDKNYQITIEDTGPKVLKVGTANSYGYKHINIRGTYMLSNLLQELTIAKSFGRHQIFLDEARINENPVNRLSRLINTQFWNSLTRRVDLNNVGEIAKDTKIDTPGAKNPRIYVPYDCPEQYEFYVQASQMHPSLKLEVEYLPKKITAEYVKSVNDTPGLLALAMEEHFNPSTGEKTLIGYPYAVPGGRFNELYGWDSYMMALGLLEANKTDVARGMVEHFIFEINHYGKILNANRSYYLCRSQPPFLTEMALVVFKKLGGRSNPDAVDLLKRAFQASIKEYKTVWTASPRLDPETGLSRYHPNGLGIPPETESDHFDTVLLPYASKHGVTLDEFKQLYNDGKIKEPKLDEFFLHDRGVRESGHDTTYRFEGVCAYLATIDLNSLLYKYEIDIADFIKEFCDDKYEDPLDHSITTSAMWKEMAKIRQEKITKYMWDDESGFFFDYNTKIKHRTSYESATTFWALWAGLATKEQAQKMVEKALPKLEMLGGLAACTERSRGPISISRPIRQWDYPFGWAPHQILAWEGLRSYGYLTVTNRLAYRWLFMMTKAFVDYNGIVVEKYDVTRGTDPHRVEAEYGNQGADFKGAATEGFGWVNASYILGLKYMNSHARRALGACIPPISFFSSLRPQERNLYGL.

Positions 1–10 are enriched in polar residues; that stretch reads MSQVNTSQGP. Positions 1 to 59 are disordered; sequence MSQVNTSQGPVAQGRQRRLSSLSEFNDPFSNAEVYYGPPTDPRKQKQAKPAKINRTRTM. An N-acetylserine modification is found at S2. Phosphoserine; by PKA occurs at positions 20 and 21. S23 is modified (phosphoserine). A compositionally biased stretch (basic residues) spans 45–55; that stretch reads QKQAKPAKINR. T58 carries the post-translational modification Phosphothreonine. Position 60 is a phosphoserine; by PKA (S60). S66 is modified (phosphoserine). Residues 73–92 are disordered; sequence FGKLQQTRRGSEDDTYSSSQ. Phosphoserine; by PKA is present on S83. 5 residues coordinate Ca(2+): D114, D116, N118, Q120, and D125. Substrate contacts are provided by residues R302, 309–310, N346, 355–357, E424, R473, and G476; these read WD and RSQ. Residues D478 and E674 each act as proton donor/acceptor in the active site.

This sequence belongs to the glycosyl hydrolase 37 family. Monomer. Interacts with BMH1 dimers; the interaction is direct and activates NTH1. Interacts with BMH2. It depends on Ca(2+) as a cofactor. Phosphorylated by protein kinase A (PKA); phosphorylation at Ser-60 and Ser-83 is required for activation by the 14-3-3 proteins BMH1 and BMH2.

It is found in the cytoplasm. It carries out the reaction alpha,alpha-trehalose + H2O = alpha-D-glucose + beta-D-glucose. Its pathway is carbohydrate degradation. Activated by calcium. Activated by protein kinase A (PKA)-mediated phosphorylation. Its function is as follows. Hydrolyzes intracellular trehalose to glucose. The disaccharide trehalose serves as a storage carbohydrate that is mobilized during nutrient stress. Regulates the level of trehalose as a protectant for cell integrity during heat stress. The sequence is that of Cytosolic neutral trehalase from Saccharomyces cerevisiae (strain ATCC 204508 / S288c) (Baker's yeast).